A 267-amino-acid polypeptide reads, in one-letter code: Tryptophan synthase alpha chain (267 aa).

Catalysis depends on proton acceptor residues E47 and D58.

Belongs to the TrpA family. As to quaternary structure, tetramer of two alpha and two beta chains.

It carries out the reaction (1S,2R)-1-C-(indol-3-yl)glycerol 3-phosphate + L-serine = D-glyceraldehyde 3-phosphate + L-tryptophan + H2O. It participates in amino-acid biosynthesis; L-tryptophan biosynthesis; L-tryptophan from chorismate: step 5/5. In terms of biological role, the alpha subunit is responsible for the aldol cleavage of indoleglycerol phosphate to indole and glyceraldehyde 3-phosphate. In Chlorobaculum tepidum (strain ATCC 49652 / DSM 12025 / NBRC 103806 / TLS) (Chlorobium tepidum), this protein is Tryptophan synthase alpha chain.